The following is a 443-amino-acid chain: Mitochondrial enolase superfamily member 1 (443 aa).

Substrate contacts are provided by residues 24–26 and Tyr34; that span reads GSD. Ser148 is modified (phosphoserine). Position 220 (Lys220) interacts with substrate. Residue Lys222 is the Proton donor/acceptor of the active site. Asp250 provides a ligand contact to Mg(2+). Substrate-binding positions include Asn252, Glu276, Glu305, 355–357, and Glu386; that span reads HAG. Glu276 and Glu305 together coordinate Mg(2+). The active site involves His355.

Belongs to the mandelate racemase/muconate lactonizing enzyme family. ENOSF1 subfamily. The cofactor is Mg(2+). Could be sumoylated.

The protein resides in the mitochondrion. It carries out the reaction L-fuconate = 2-dehydro-3-deoxy-L-fuconate + H2O. Functionally, plays a role in the catabolism of L-fucose, a sugar that is part of the carbohydrates that are attached to cellular glycoproteins. Catalyzes the dehydration of L-fuconate to 2-keto-3-deoxy-L-fuconate by the abstraction of the 2-proton to generate an enediolate intermediate that is stabilized by the magnesium ion. May down-regulate thymidylate synthase activity, possibly already at the RNA level, by promoting the degradation of TYMS mRNA via an antisense RNA-based mechanism. In Pongo abelii (Sumatran orangutan), this protein is Mitochondrial enolase superfamily member 1 (ENOSF1).